The chain runs to 687 residues: DNA-directed RNA polymerase subunit beta' (687 aa).

Positions 69, 71, 87, and 90 each coordinate Zn(2+). The Mg(2+) site is built by aspartate 491, aspartate 493, and aspartate 495.

This sequence belongs to the RNA polymerase beta' chain family. RpoC1 subfamily. As to quaternary structure, in plastids the minimal PEP RNA polymerase catalytic core is composed of four subunits: alpha, beta, beta', and beta''. When a (nuclear-encoded) sigma factor is associated with the core the holoenzyme is formed, which can initiate transcription. Mg(2+) serves as cofactor. Zn(2+) is required as a cofactor.

It localises to the plastid. The protein localises to the chloroplast. The catalysed reaction is RNA(n) + a ribonucleoside 5'-triphosphate = RNA(n+1) + diphosphate. Functionally, DNA-dependent RNA polymerase catalyzes the transcription of DNA into RNA using the four ribonucleoside triphosphates as substrates. The protein is DNA-directed RNA polymerase subunit beta' of Glycine max (Soybean).